A 938-amino-acid chain; its full sequence is Translation initiation factor IF-2 (938 aa).

The interval 55 to 322 (KAEASAAPAA…RKSKRARRQE (268 aa)) is disordered. 2 stretches are compositionally biased toward low complexity: residues 57 to 68 (EASAAPAAPAEK) and 77 to 117 (KKAA…AAAP). Residues 118–136 (KPGPKPAPVAEQPAPPAEP) show a composition bias toward pro residues. 3 stretches are compositionally biased toward low complexity: residues 141 to 153 (APEAPAASAAPAA), 180 to 198 (GMGRRPAPGAPAAPGAGDN), and 224 to 233 (MMPKSPSAFG). Positions 247 to 293 (PGRGGAPGRGGAPGRGGVGTGAPGRGGAPGGGFGPSGGGRPGGGRPG) are enriched in gly residues. Residues 310–319 (RRGRKSKRAR) are compositionally biased toward basic residues. Positions 431-603 (ARPPVVTVMG…VVLTADASLD (173 aa)) constitute a tr-type G domain. Residues 440-447 (GHVDHGKT) form a G1 region. GTP is bound at residue 440-447 (GHVDHGKT). The interval 465 to 469 (GITQH) is G2. Residues 490–493 (DTPG) form a G3 region. Residues 490–494 (DTPGH) and 544–547 (NKID) each bind GTP. The tract at residues 544–547 (NKID) is G4. Residues 580–582 (SAK) are G5.

This sequence belongs to the TRAFAC class translation factor GTPase superfamily. Classic translation factor GTPase family. IF-2 subfamily.

The protein resides in the cytoplasm. In terms of biological role, one of the essential components for the initiation of protein synthesis. Protects formylmethionyl-tRNA from spontaneous hydrolysis and promotes its binding to the 30S ribosomal subunits. Also involved in the hydrolysis of GTP during the formation of the 70S ribosomal complex. The protein is Translation initiation factor IF-2 of Nocardioides sp. (strain ATCC BAA-499 / JS614).